An 87-amino-acid polypeptide reads, in one-letter code: Small ribosomal subunit protein bS20 (87 aa).

The protein belongs to the bacterial ribosomal protein bS20 family.

Its function is as follows. Binds directly to 16S ribosomal RNA. The protein is Small ribosomal subunit protein bS20 of Clostridium botulinum (strain Alaska E43 / Type E3).